The sequence spans 423 residues: Serine hydroxymethyltransferase (423 aa).

(6S)-5,6,7,8-tetrahydrofolate contacts are provided by residues L120 and 124–126; that span reads GHL. K229 bears the N6-(pyridoxal phosphate)lysine mark. (6S)-5,6,7,8-tetrahydrofolate-binding positions include E245 and 353–355; that span reads SPF.

This sequence belongs to the SHMT family. In terms of assembly, homodimer. Pyridoxal 5'-phosphate serves as cofactor.

It is found in the cytoplasm. The enzyme catalyses (6R)-5,10-methylene-5,6,7,8-tetrahydrofolate + glycine + H2O = (6S)-5,6,7,8-tetrahydrofolate + L-serine. It functions in the pathway one-carbon metabolism; tetrahydrofolate interconversion. Its pathway is amino-acid biosynthesis; glycine biosynthesis; glycine from L-serine: step 1/1. In terms of biological role, catalyzes the reversible interconversion of serine and glycine with tetrahydrofolate (THF) serving as the one-carbon carrier. This reaction serves as the major source of one-carbon groups required for the biosynthesis of purines, thymidylate, methionine, and other important biomolecules. Also exhibits THF-independent aldolase activity toward beta-hydroxyamino acids, producing glycine and aldehydes, via a retro-aldol mechanism. In Prochlorococcus marinus (strain MIT 9312), this protein is Serine hydroxymethyltransferase.